The primary structure comprises 297 residues: Undecaprenyl-diphosphatase 3 (297 aa).

The next 6 helical transmembrane spans lie at 39–59 (PGAAFTAVTQIGTETAVLIYF), 89–109 (WLVLLGTIPIGLLGVTLQDAI), 118–138 (LIATTLIVLGLILGGADWYAS), 203–223 (FLLAMPAVLASGVFELKSIGG), 237–257 (PTIVATVVAFATGYAAIAWFL), and 268–288 (FVLYRVALGLLLLALLAGGAI).

The protein belongs to the UppP family.

It localises to the cell membrane. The enzyme catalyses di-trans,octa-cis-undecaprenyl diphosphate + H2O = di-trans,octa-cis-undecaprenyl phosphate + phosphate + H(+). Functionally, catalyzes the dephosphorylation of undecaprenyl diphosphate (UPP). Confers resistance to bacitracin. In Frankia alni (strain DSM 45986 / CECT 9034 / ACN14a), this protein is Undecaprenyl-diphosphatase 3.